The chain runs to 133 residues: MSWQTYVDDHLMCDIDGQGQHLAAASIVGHDGSIWAQSASFPQLKPEEITGIMKDFDEPGHLAPTGLYIAGTKYMVIQGESGAVIRGKKGSGGITIKKTGQALVFGIYEEPVTPGQCNMVVERLGDYLIEQGM.

It belongs to the profilin family. Occurs in many kinds of cells as a complex with monomeric actin in a 1:1 ratio.

The protein resides in the cytoplasm. It localises to the cytoskeleton. In terms of biological role, binds to actin and affects the structure of the cytoskeleton. At high concentrations, profilin prevents the polymerization of actin, whereas it enhances it at low concentrations. By binding to PIP2, it inhibits the formation of IP3 and DG. This chain is Profilin, found in Mercurialis annua (Annual mercury).